The chain runs to 131 residues: Fumarate reductase subunit C (131 aa).

A run of 3 helical transmembrane segments spans residues 30–50, 63–83, and 109–129; these read EGTA…LFAL, FLQN…ALLH, and IIKS…FVAL.

The protein belongs to the FrdC family. As to quaternary structure, part of an enzyme complex containing four subunits: a flavoprotein (FrdA), an iron-sulfur protein (FrdB), and two hydrophobic anchor proteins (FrdC and FrdD).

It localises to the cell inner membrane. In terms of biological role, two distinct, membrane-bound, FAD-containing enzymes are responsible for the catalysis of fumarate and succinate interconversion; fumarate reductase is used in anaerobic growth, and succinate dehydrogenase is used in aerobic growth. Anchors the catalytic components of the fumarate reductase complex to the cell inner membrane, binds quinones. The chain is Fumarate reductase subunit C from Escherichia coli O17:K52:H18 (strain UMN026 / ExPEC).